Here is a 109-residue protein sequence, read N- to C-terminus: MSLTADPPACTVPAAGGSSTHKLVNGGAEKIIFKIKSSNNNEYRIAPVFGFVDPAGSKDVVITRTAGAPKEDKLVIHFAPAPADATDAQAAFAAVTPAGTVTIPMSATA.

In terms of domain architecture, MSP spans 2–109 (SLTADPPACT…TVTIPMSATA (108 aa)).

In terms of tissue distribution, expressed at higher level in testis.

This chain is Sperm-specific class P protein 9/11 (ssp-9), found in Caenorhabditis elegans.